A 152-amino-acid chain; its full sequence is SsrA-binding protein (152 aa).

It belongs to the SmpB family.

The protein localises to the cytoplasm. Its function is as follows. Required for rescue of stalled ribosomes mediated by trans-translation. Binds to transfer-messenger RNA (tmRNA), required for stable association of tmRNA with ribosomes. tmRNA and SmpB together mimic tRNA shape, replacing the anticodon stem-loop with SmpB. tmRNA is encoded by the ssrA gene; the 2 termini fold to resemble tRNA(Ala) and it encodes a 'tag peptide', a short internal open reading frame. During trans-translation Ala-aminoacylated tmRNA acts like a tRNA, entering the A-site of stalled ribosomes, displacing the stalled mRNA. The ribosome then switches to translate the ORF on the tmRNA; the nascent peptide is terminated with the 'tag peptide' encoded by the tmRNA and targeted for degradation. The ribosome is freed to recommence translation, which seems to be the essential function of trans-translation. The protein is SsrA-binding protein of Helicobacter pylori (strain HPAG1).